The primary structure comprises 1509 residues: Myosin-2 heavy chain, non muscle (1509 aa).

The Myosin N-terminal SH3-like domain occupies 32–85 (SDKTLAWWPTKDADRAFCHVEVTKDDGKNFTVRLENGEEKSQPKNEKNFLGVNP). In terms of domain architecture, Myosin motor spans 89–787 (DGVEDMGELG…QLAAIEELRE (699 aa)). An N6,N6,N6-trimethyllysine modification is found at Lys-133. An ATP-binding site is contributed by 182-189 (GESGAGKT). The segment at 623-643 (APAEEEKAAAGGSRNRSTGRG) is disordered. 2 actin-binding regions span residues 660 to 682 (LAHLMSMLSSTAPHFIRCIIPNL) and 766 to 780 (RFGVTKIFFRSGQLA). Positions 790 to 819 (ISKMVVSIQAGARAFLARRMYDKMREQTVS) constitute an IQ domain. The interval 848 to 1226 (LISQRNFQKE…AERDSGAQQR (379 aa)) is alpha-helical tailpiece (S2). Residues 848-1509 (LISQRNFQKE…VRAGSARAEE (662 aa)) are a coiled coil. Composition is skewed to basic and acidic residues over residues 958–1019 (ELKA…KDAL), 1034–1047 (KNTERGADDVRNEL), 1097–1107 (EDARSEVDSLK), 1115–1141 (KSLKTAKDQNRDLDEQLEDERTVRANV), and 1179–1189 (QVDETKRRLEE). Disordered regions lie at residues 958–1049 (ELKA…ELDD), 1068–1141 (LAQT…RANV), 1170–1195 (AAQAKTLKTQVDETKRRLEEAEASAA), 1213–1259 (ADLD…RLEG), 1352–1425 (VAKE…NREL), and 1474–1509 (QLQDEIDGTPSSRGGSTRGASARGASVRAGSARAEE). The tract at residues 1227-1252 (RKLNTRISELQSELENAPKTGGASSE) is hinge. Residues 1231-1240 (TRISELQSEL) show a composition bias toward polar residues. An alpha-helical tailpiece (LMM) region spans residues 1253 to 1482 (EVKRLEGELE…AQLQDEIDGT (230 aa)). Residues 1253-1509 (EVKRLEGELE…VRAGSARAEE (257 aa)) are light meromyosin (LMM). The interval 1483 to 1509 (PSSRGGSTRGASARGASVRAGSARAEE) is nonhelical tailpiece. The segment covering 1484–1509 (SSRGGSTRGASARGASVRAGSARAEE) has biased composition (low complexity). Ser-1489, Ser-1494, and Ser-1499 each carry phosphoserine.

This sequence belongs to the TRAFAC class myosin-kinesin ATPase superfamily. Myosin family. In terms of assembly, myosin II heavy chain is two-headed. It self-assembles into filaments. Hexamer of 2 heavy chain subunits (MHC), 2 alkali light chain subunits (MLC) and 2 regulatory light chain subunits (MLC-2).

Myosin is a protein that binds to F-actin and has ATPase activity that is activated by F-actin. This chain is Myosin-2 heavy chain, non muscle, found in Acanthamoeba castellanii (Amoeba).